The chain runs to 133 residues: Snaclec botrocetin subunit alpha (133 aa).

3 disulfide bridges follow: Cys-2-Cys-13, Cys-30-Cys-128, and Cys-103-Cys-120. Positions 9–129 constitute a C-type lectin domain; the sequence is YEGNCYKFFQ…CAQKNPFVCK (121 aa).

This sequence belongs to the snaclec family. As to quaternary structure, heterodimer of subunits alpha and beta; disulfide-linked. Botrocetin and vWF form a soluble complex. Expressed by the venom gland.

The protein resides in the secreted. Snaclec that binds to von Willebrand factor (VWF) and induces its interaction with GPIbalpha (GP1BA) (via the vWF A1 domain), resulting in platelet aggregation. In Bothrops jararaca (Jararaca), this protein is Snaclec botrocetin subunit alpha.